Reading from the N-terminus, the 209-residue chain is Ubiquitin-conjugating enzyme E2 S (209 aa).

Positions 14 to 160 (QTIRQVMREL…ARMMTEIHAQ (147 aa)) constitute a UBC core domain. The active-site Glycyl thioester intermediate is cysteine 98. The disordered stretch occupies residues 164-209 (CAAGAAGDSKDDDGPSTKKHAGLDKKLQDKKKEKLLKEKKRMLKRL). Positions 171–199 (DSKDDDGPSTKKHAGLDKKLQDKKKEKLL) are enriched in basic and acidic residues. The segment covering 200-209 (KEKKRMLKRL) has biased composition (basic residues).

Belongs to the ubiquitin-conjugating enzyme family.

It catalyses the reaction S-ubiquitinyl-[E1 ubiquitin-activating enzyme]-L-cysteine + [E2 ubiquitin-conjugating enzyme]-L-cysteine = [E1 ubiquitin-activating enzyme]-L-cysteine + S-ubiquitinyl-[E2 ubiquitin-conjugating enzyme]-L-cysteine.. The protein operates within protein modification; protein ubiquitination. Its function is as follows. Catalyzes the covalent attachment of ubiquitin to other proteins. Acts as an essential factor of the anaphase promoting complex/cyclosome (APC/C), a cell cycle-regulated ubiquitin ligase that controls progression through mitosis. Acts by specifically elongating polyubiquitin chains initiated by the E2 enzyme vih/UbcH10 on APC/C substrates, enhancing the degradation of APC/C substrates by the proteasome and promoting mitotic exit. The chain is Ubiquitin-conjugating enzyme E2 S from Drosophila ananassae (Fruit fly).